Consider the following 298-residue polypeptide: Movement protein BC1 (298 aa).

The interval 253 to 273 is disordered; it reads LPEASLDPGDSVSQTQSMTKK.

The protein belongs to the begomovirus movement protein BC1 family. As to quaternary structure, binds to dimeric supercoiled plasmid DNA. Phosphorylated.

It localises to the host cell membrane. The protein localises to the host microsome membrane. The protein resides in the host endoplasmic reticulum membrane. Its function is as follows. Transports viral genome to neighboring plant cells directly through plasmosdesmata, without any budding. The movement protein allows efficient cell to cell propagation, by bypassing the host cell wall barrier. Begomovirus genome is shuttled out of nucleus by Nuclear shuttle protein (NSP) and the movement protein transports the DNA-NSP complex to cell plasmodesmata and facilitates further movement across the cell wall. This is Movement protein BC1 from Hewittia sublobata (Coralbush).